The primary structure comprises 240 residues: MNKNVVIKSLATLTILTSVAGIGTTLVEEVQQTAKAENNVTKIKDTNIFPYTGVVAFNSATGFVVGKNTILTNKHVSKNYKVGDRITAHPNSDKSNGGIYSIKKIINYPGKEDVSVIKVEEHAIERGPKGFNFNDNVTPFKYAAGAKAGDRIKVIGYPHPYKNKYVLHESTGPVMSVEGSSIVYSAHTESGNSGSPVLNSNNELVGIHFASDVKNDDNRNAYGVYFTPEIKRFIAENIDK.

A signal peptide spans 1 to 36; the sequence is MNKNVVIKSLATLTILTSVAGIGTTLVEEVQQTAKA. Catalysis depends on charge relay system residues His-75, Asp-113, and Ser-193.

This sequence belongs to the peptidase S1B family.

It is found in the secreted. Serine protease that cleaves specifically after the sequence Trp-Glu-Leu-Gln. The sequence is that of Serine protease SplB (splB) from Staphylococcus aureus (strain bovine RF122 / ET3-1).